The primary structure comprises 428 residues: MQILVYDNLDEKQKEEALKRPAISAKDEISKIVSSIIKEVQEKGDEALIEQALKFDKAEISKIKITQEEITQASKRLDKDLQEAILVAYENIKKFHEAQIPHEIALETTKGVKCEVLTRPIEKVGLYIPGGLAPLFSTVLMLAIPAKIAGCEKIVLASPAKINDAVLFCAKLCGVDEIYQMGGAGAIAALAYGTQSVLKVDKIFGPGNAFVTEAKRQVSSDINGAAIDMQAGPSEVLVIADDLANEKFVASDLLSQAEHGADSQVILVCLSQDFAKKASDEVQSQLELLPRKELASKSIANSRIIIAKDLNQALEISNLYAPEHLIIQTQNPRELLKGVKHAGSVFLGAYSPESMGDYASGTNHVLPTYGLTKTHSSLGLADFSKRMTVQELSKEGFLALGKSVEILAQNEHLDAHKNAVTFRLESLK.

Substrate contacts are provided by Ser-234, Gln-256, and His-259. Residues Gln-256 and His-259 each contribute to the Zn(2+) site. Residues Glu-323 and His-324 each act as proton acceptor in the active site. Substrate contacts are provided by His-324, Asp-357, Glu-411, and His-416. A Zn(2+)-binding site is contributed by Asp-357. His-416 provides a ligand contact to Zn(2+).

This sequence belongs to the histidinol dehydrogenase family. The cofactor is Zn(2+).

It catalyses the reaction L-histidinol + 2 NAD(+) + H2O = L-histidine + 2 NADH + 3 H(+). It functions in the pathway amino-acid biosynthesis; L-histidine biosynthesis; L-histidine from 5-phospho-alpha-D-ribose 1-diphosphate: step 9/9. In terms of biological role, catalyzes the sequential NAD-dependent oxidations of L-histidinol to L-histidinaldehyde and then to L-histidine. This chain is Histidinol dehydrogenase, found in Campylobacter jejuni (strain RM1221).